A 113-amino-acid chain; its full sequence is uncharacterized protein (113 aa).

Residues 1 to 19 (MLSPLSPRIIAAFTTAVGA) form the signal peptide.

The protein to M.tuberculosis Rv1291c.

This is an uncharacterized protein from Mycobacterium tuberculosis (strain CDC 1551 / Oshkosh).